An 870-amino-acid chain; its full sequence is Probable inorganic carbon transporter subunit DabA (870 aa).

Residues Cys-381, Asp-383, His-564, and Cys-579 each coordinate Zn(2+).

Belongs to the inorganic carbon transporter (TC 9.A.2) DabA family. Forms a complex with DabB. It depends on Zn(2+) as a cofactor.

It localises to the cell membrane. In terms of biological role, part of an energy-coupled inorganic carbon pump. The chain is Probable inorganic carbon transporter subunit DabA from Geobacillus kaustophilus (strain HTA426).